Consider the following 123-residue polypeptide: Cholecystokinin A (123 aa).

The signal sequence occupies residues 1–20; that stretch reads MYSGICICLLLAMLSASSKA. Positions 21 to 103 are excised as a propeptide; sequence HQSEDAVVTE…FDQPHRINDR (83 aa). The residue at position 105 (Tyr105) is a Sulfotyrosine. Phe111 carries the phenylalanine amide modification. The propeptide occupies 115–123; it reads SAEEYEYSS.

The protein belongs to the gastrin/cholecystokinin family. The precursor is cleaved by proteases to produce a number of active cholecystokinins. Brain, gastrointestinal tract and lung.

It localises to the secreted. This Xenopus laevis (African clawed frog) protein is Cholecystokinin A (cck-a).